A 518-amino-acid chain; its full sequence is DNA-binding protein D-ETS-4 (518 aa).

2 disordered regions span residues 74-113 (SQPI…QSSP) and 152-172 (LPPS…SCGE). Residues 84-94 (TAPYTNPSSHQ) are compositionally biased toward polar residues. Residues 102–113 (PHSAYPSPQSSP) show a composition bias toward low complexity. Positions 158–171 (ESNCETPSPRSSCG) are enriched in polar residues. The 87-residue stretch at 258 to 344 (HAKREADAIC…AQLEIWKMAY (87 aa)) folds into the PNT domain. The interval 393–426 (APLNGSTTSPPATNASNGGTATVKRPNGGRTGGG) is disordered. Residues 396-412 (NGSTTSPPATNASNGGT) show a composition bias toward polar residues. Positions 430-513 (IHLWQFLKEL…RSQRLVYQFC (84 aa)) form a DNA-binding region, ETS.

The protein belongs to the ETS family. As to expression, transient high expression in pole cells during embryonic stages 8-11.

The protein localises to the nucleus. May have a role in germline development. This chain is DNA-binding protein D-ETS-4 (Ets98B), found in Drosophila melanogaster (Fruit fly).